A 245-amino-acid chain; its full sequence is Spore membrane assembly protein 1 (245 aa).

Functionally, involved in spore and ascus formation. Required for the efficient assembly of the precursors of the prospore membrane to a continuous prospore membrane. The chain is Spore membrane assembly protein 1 (SMA1) from Saccharomyces cerevisiae (strain ATCC 204508 / S288c) (Baker's yeast).